The following is a 311-amino-acid chain: Endosome-associated-trafficking regulator 1 (311 aa).

Residues 167 to 278 adopt a coiled-coil conformation; the sequence is RGNAENGTKN…KSENERLRLG (112 aa).

It belongs to the ENTR1 family.

It is found in the cytoplasm. Its subcellular location is the early endosome. The protein localises to the endosome. The protein resides in the recycling endosome. It localises to the midbody. It is found in the cytoskeleton. Its subcellular location is the microtubule organizing center. The protein localises to the centrosome. The protein resides in the cilium basal body. Its function is as follows. Endosome-associated protein that plays a role in membrane receptor sorting, cytokinesis and ciliogenesis. The chain is Endosome-associated-trafficking regulator 1 from Danio rerio (Zebrafish).